A 549-amino-acid polypeptide reads, in one-letter code: Cytoplasmic trehalase (549 aa).

Residues Arg168, 175–176 (WD), Asn212, 221–223 (RSQ), 292–294 (RDE), and Gly324 each bind substrate. Residues Asp326 and Glu509 each act as proton donor/acceptor in the active site. A substrate-binding site is contributed by Glu525.

The protein belongs to the glycosyl hydrolase 37 family. In terms of assembly, monomer.

The protein resides in the cytoplasm. It carries out the reaction alpha,alpha-trehalose + H2O = alpha-D-glucose + beta-D-glucose. It functions in the pathway glycan degradation; trehalose degradation; D-glucose from alpha,alpha-trehalose: step 1/1. Functionally, hydrolyzes trehalose to glucose. Could be involved, in cells returning to low osmolarity conditions, in the utilization of the accumulated cytoplasmic trehalose, which was synthesized in response to high osmolarity. The protein is Cytoplasmic trehalase of Escherichia coli O127:H6 (strain E2348/69 / EPEC).